The chain runs to 1027 residues: INO80 complex subunit D (1027 aa).

Residue Lys87 forms a Glycyl lysine isopeptide (Lys-Gly) (interchain with G-Cter in SUMO2) linkage. Ser132 carries the phosphoserine modification. 5 disordered regions span residues 193–278, 519–574, 813–850, 914–969, and 982–1027; these read HFSP…VDPP, RGDN…LSMP, RQQYSSDHSHSSPHGSHYDSEHVPSPYSDHITSPHTTS, LSTS…TSPK, and QLSS…PSPN. Residues 201 to 216 show a composition bias toward low complexity; it reads SQQQPPQQHSHLSPLS. Residues 229–257 show a composition bias toward polar residues; sequence VCKSPQPQNTSLPMQGVAPTTHTIAQARQ. Over residues 525–559 the composition is skewed to basic residues; it reads KVQHQQQRKPRKKTKPPALTKKHKKKRRRGPRRPQ. Residues 914–932 are compositionally biased toward low complexity; that stretch reads LSTSLSTPPTTSNSETTQP. Residues 937–954 are compositionally biased toward polar residues; sequence VTPSSSSVLPGLPQTSFS. Residues 1001 to 1027 are compositionally biased toward low complexity; the sequence is APPTGFTVTGATATSTNNASSPFPSPN.

The protein belongs to the INO80D family. As to quaternary structure, component of the chromatin remodeling INO80 complex; specifically part of a complex module associated with the N-terminus of INO80.

It is found in the nucleus. Its function is as follows. Putative regulatory component of the chromatin remodeling INO80 complex which is involved in transcriptional regulation, DNA replication and probably DNA repair. The chain is INO80 complex subunit D from Homo sapiens (Human).